A 614-amino-acid chain; its full sequence is ATP-dependent RNA helicase dbp-3 (614 aa).

The segment at 1–138 is disordered; sequence MSSTKKHSRS…GTTTPAASTN (138 aa). A compositionally biased stretch (basic and acidic residues) spans 9 to 36; it reads RSEGEEKDARLAKKVKTDETPVDGEVKK. Composition is skewed to basic residues over residues 37-58 and 91-109; these read ERKK…KSKK and KKEK…KKAK. The span at 117–138 shows a compositional bias: low complexity; that stretch reads EESTSASKATTNGTTTPAASTN. The Q motif signature appears at 180 to 207; sequence MNFSQLPQSNLISKNPFAAYTNPTPIQS. The 185-residue stretch at 210 to 394 folds into the Helicase ATP-binding domain; the sequence is WPFSLSGRDV…ESYMINPAQV (185 aa). An ATP-binding site is contributed by 223–230; the sequence is AETGSGKT. Residues 340 to 343 carry the DEAD box motif; sequence DEAD. Positions 435–584 constitute a Helicase C-terminal domain; the sequence is RLYELLKEAQ…PVPEELLKFG (150 aa).

This sequence belongs to the DEAD box helicase family. DDX5/DBP2 subfamily.

It localises to the nucleus. It is found in the nucleolus. The enzyme catalyses ATP + H2O = ADP + phosphate + H(+). Functionally, ATP-dependent RNA helicase required for 60S ribosomal subunit synthesis. Involved in efficient pre-rRNA processing, predominantly at site A3, which is necessary for the normal formation of 25S and 5.8S rRNAs. The protein is ATP-dependent RNA helicase dbp-3 (dbp-3) of Neurospora crassa (strain ATCC 24698 / 74-OR23-1A / CBS 708.71 / DSM 1257 / FGSC 987).